A 725-amino-acid polypeptide reads, in one-letter code: Ribosomal RNA large subunit methyltransferase K/L (725 aa).

The 112-residue stretch at 46–157 (VAYRLCLWSR…RGQATLSLDL (112 aa)) folds into the THUMP domain. The interval 393-412 (TGERGERNDDGQARAPSEPA) is disordered. The segment covering 395–404 (ERGERNDDGQ) has biased composition (basic and acidic residues).

It belongs to the methyltransferase superfamily. RlmKL family.

The protein localises to the cytoplasm. The enzyme catalyses guanosine(2445) in 23S rRNA + S-adenosyl-L-methionine = N(2)-methylguanosine(2445) in 23S rRNA + S-adenosyl-L-homocysteine + H(+). The catalysed reaction is guanosine(2069) in 23S rRNA + S-adenosyl-L-methionine = N(2)-methylguanosine(2069) in 23S rRNA + S-adenosyl-L-homocysteine + H(+). In terms of biological role, specifically methylates the guanine in position 2445 (m2G2445) and the guanine in position 2069 (m7G2069) of 23S rRNA. The polypeptide is Ribosomal RNA large subunit methyltransferase K/L (Pseudomonas paraeruginosa (strain DSM 24068 / PA7) (Pseudomonas aeruginosa (strain PA7))).